Here is a 456-residue protein sequence, read N- to C-terminus: tRNA modification GTPase MnmE (456 aa).

The (6S)-5-formyl-5,6,7,8-tetrahydrofolate site is built by R24, E81, and K120. One can recognise a TrmE-type G domain in the interval 216 to 379; sequence GMTVVIAGRP…LRDHLKACMG (164 aa). N226 provides a ligand contact to K(+). GTP is bound by residues 226-231, 245-251, 270-273, and 335-338; these read NAGKSS, TDIAGTT, DTAG, and NKAD. S230 is a Mg(2+) binding site. The K(+) site is built by T245, I247, and T250. T251 provides a ligand contact to Mg(2+). Residue K456 coordinates (6S)-5-formyl-5,6,7,8-tetrahydrofolate.

The protein belongs to the TRAFAC class TrmE-Era-EngA-EngB-Septin-like GTPase superfamily. TrmE GTPase family. In terms of assembly, homodimer. Heterotetramer of two MnmE and two MnmG subunits. It depends on K(+) as a cofactor.

It is found in the cytoplasm. Exhibits a very high intrinsic GTPase hydrolysis rate. Involved in the addition of a carboxymethylaminomethyl (cmnm) group at the wobble position (U34) of certain tRNAs, forming tRNA-cmnm(5)s(2)U34. The protein is tRNA modification GTPase MnmE of Pseudomonas putida (strain GB-1).